The sequence spans 257 residues: Putative hydro-lyase Bamb_5282 (257 aa).

This sequence belongs to the D-glutamate cyclase family.

In Burkholderia ambifaria (strain ATCC BAA-244 / DSM 16087 / CCUG 44356 / LMG 19182 / AMMD) (Burkholderia cepacia (strain AMMD)), this protein is Putative hydro-lyase Bamb_5282.